Reading from the N-terminus, the 248-residue chain is Ureidoacrylate amidohydrolase RutB (248 aa).

D41 acts as the Proton acceptor in catalysis. The active site involves K150. Catalysis depends on C183, which acts as the Nucleophile.

Belongs to the isochorismatase family. RutB subfamily.

The catalysed reaction is (Z)-3-ureidoacrylate + H2O + H(+) = (Z)-3-aminoacrylate + NH4(+) + CO2. It carries out the reaction (Z)-3-ureidoacrylate + H2O = (Z)-3-aminoacrylate + carbamate + H(+). It catalyses the reaction (Z)-2-methylureidoacrylate + H2O + H(+) = (Z)-2-methylaminoacrylate + NH4(+) + CO2. In terms of biological role, hydrolyzes ureidoacrylate to form aminoacrylate and carbamate. The carbamate hydrolyzes spontaneously, thereby releasing one of the nitrogen atoms of the pyrimidine ring as ammonia and one of its carbon atoms as CO2. This chain is Ureidoacrylate amidohydrolase RutB, found in Methylorubrum extorquens (strain CM4 / NCIMB 13688) (Methylobacterium extorquens).